The primary structure comprises 254 residues: Imidazole glycerol phosphate synthase subunit HisF (254 aa).

Residues Asp-12 and Asp-131 contribute to the active site.

Belongs to the HisA/HisF family. In terms of assembly, heterodimer of HisH and HisF.

The protein localises to the cytoplasm. It catalyses the reaction 5-[(5-phospho-1-deoxy-D-ribulos-1-ylimino)methylamino]-1-(5-phospho-beta-D-ribosyl)imidazole-4-carboxamide + L-glutamine = D-erythro-1-(imidazol-4-yl)glycerol 3-phosphate + 5-amino-1-(5-phospho-beta-D-ribosyl)imidazole-4-carboxamide + L-glutamate + H(+). Its pathway is amino-acid biosynthesis; L-histidine biosynthesis; L-histidine from 5-phospho-alpha-D-ribose 1-diphosphate: step 5/9. Its function is as follows. IGPS catalyzes the conversion of PRFAR and glutamine to IGP, AICAR and glutamate. The HisF subunit catalyzes the cyclization activity that produces IGP and AICAR from PRFAR using the ammonia provided by the HisH subunit. The chain is Imidazole glycerol phosphate synthase subunit HisF from Rhizorhabdus wittichii (strain DSM 6014 / CCUG 31198 / JCM 15750 / NBRC 105917 / EY 4224 / RW1) (Sphingomonas wittichii).